The primary structure comprises 218 residues: ATP phosphoribosyltransferase (218 aa).

The protein belongs to the ATP phosphoribosyltransferase family. Short subfamily. Heteromultimer composed of HisG and HisZ subunits.

The protein localises to the cytoplasm. The catalysed reaction is 1-(5-phospho-beta-D-ribosyl)-ATP + diphosphate = 5-phospho-alpha-D-ribose 1-diphosphate + ATP. It participates in amino-acid biosynthesis; L-histidine biosynthesis; L-histidine from 5-phospho-alpha-D-ribose 1-diphosphate: step 1/9. Functionally, catalyzes the condensation of ATP and 5-phosphoribose 1-diphosphate to form N'-(5'-phosphoribosyl)-ATP (PR-ATP). Has a crucial role in the pathway because the rate of histidine biosynthesis seems to be controlled primarily by regulation of HisG enzymatic activity. This chain is ATP phosphoribosyltransferase, found in Trichormus variabilis (strain ATCC 29413 / PCC 7937) (Anabaena variabilis).